The sequence spans 121 residues: Large ribosomal subunit protein uL18 (121 aa).

A disordered region spans residues Ala63–Lys88. The span at Lys73–Leu87 shows a compositional bias: basic residues.

It belongs to the universal ribosomal protein uL18 family. In terms of assembly, component of the large ribosomal subunit (LSU).

The protein resides in the cytoplasm. It is found in the nucleus. Functionally, component of the ribosome, a large ribonucleoprotein complex responsible for the synthesis of proteins in the cell. The small ribosomal subunit (SSU) binds messenger RNAs (mRNAs) and translates the encoded message by selecting cognate aminoacyl-transfer RNA (tRNA) molecules. The large subunit (LSU) contains the ribosomal catalytic site termed the peptidyl transferase center (PTC), which catalyzes the formation of peptide bonds, thereby polymerizing the amino acids delivered by tRNAs into a polypeptide chain. The nascent polypeptides leave the ribosome through a tunnel in the LSU and interact with protein factors that function in enzymatic processing, targeting, and the membrane insertion of nascent chains at the exit of the ribosomal tunnel. In Solanum melongena (Eggplant), this protein is Large ribosomal subunit protein uL18 (RPL5).